A 373-amino-acid polypeptide reads, in one-letter code: 3-isopropylmalate dehydrogenase (373 aa).

82–93 (GPKWGTGTVRPE) contributes to the NAD(+) binding site. 4 residues coordinate substrate: R100, R110, R139, and D231. D231, D256, and D260 together coordinate Mg(2+). 295 to 306 (GSAPDLPANKVN) is an NAD(+) binding site.

The protein belongs to the isocitrate and isopropylmalate dehydrogenases family. In terms of assembly, homodimer. Requires Mg(2+) as cofactor. Mn(2+) is required as a cofactor.

Its subcellular location is the cytoplasm. The catalysed reaction is (2R,3S)-3-isopropylmalate + NAD(+) = 4-methyl-2-oxopentanoate + CO2 + NADH. It functions in the pathway amino-acid biosynthesis; L-leucine biosynthesis; L-leucine from 3-methyl-2-oxobutanoate: step 3/4. Its function is as follows. Catalyzes the oxidation of 3-carboxy-2-hydroxy-4-methylpentanoate (3-isopropylmalate) to 3-carboxy-4-methyl-2-oxopentanoate. The product decarboxylates to 4-methyl-2 oxopentanoate. In Candida albicans (Yeast), this protein is 3-isopropylmalate dehydrogenase (LEU2).